The sequence spans 87 residues: Small ribosomal subunit protein bS18 (87 aa).

The span at 1-19 (MSTRSRARKRSRVRSRTRR) shows a compositional bias: basic residues. Residues 1-25 (MSTRSRARKRSRVRSRTRRKDPIFV) form a disordered region.

The protein belongs to the bacterial ribosomal protein bS18 family. As to quaternary structure, part of the 30S ribosomal subunit. Forms a tight heterodimer with protein bS6.

Its function is as follows. Binds as a heterodimer with protein bS6 to the central domain of the 16S rRNA, where it helps stabilize the platform of the 30S subunit. This chain is Small ribosomal subunit protein bS18, found in Rhodopirellula baltica (strain DSM 10527 / NCIMB 13988 / SH1).